We begin with the raw amino-acid sequence, 471 residues long: Ribonuclease 3 (471 aa).

The segment covering 1 to 10 has biased composition (basic residues); sequence MGSKVAGKKK. 2 disordered regions span residues 1–29 and 168–189; these read MGSKVAGKKKTQNDNKLDNENGSQQRENI and NLNEKEDEEEDEGEDSYDPTKA. Residues 20 to 29 are compositionally biased toward polar residues; sequence ENGSQQRENI. Residues 172–184 are compositionally biased toward acidic residues; that stretch reads KEDEEEDEGEDSY. Residues 227–331 enclose the RNase III domain; it reads LSGSEMINAH…YIGGLMEDDP (105 aa). Residues 369–437 form the DRBM domain; it reads NAKRQLYSLI…AENALRDKKM (69 aa). The segment at 451–471 is disordered; that stretch reads SESVLKDPSQKNKKRKFSDTS. A compositionally biased stretch (basic residues) spans 461–471; that stretch reads KNKKRKFSDTS.

It catalyses the reaction Endonucleolytic cleavage to 5'-phosphomonoester.. DsRNA-specific nuclease that cleaves eukaryotic pre-ribosomal RNA at the U3 snoRNP-dependent A0 site in the 5'-external transcribed spacer (ETS) and in the 3'-ETS. In vitro, cleaves synthetic 5'-ETS RNA A0 site in the absence of snoRNA or other factors. Has an essential growth function in addition to pre-rRNA processing. The polypeptide is Ribonuclease 3 (RNT1) (Saccharomyces cerevisiae (strain ATCC 204508 / S288c) (Baker's yeast)).